We begin with the raw amino-acid sequence, 320 residues long: Cytochrome c biogenesis protein CcsA (320 aa).

8 helical membrane-spanning segments follow: residues 13-33 (ISFSVVSIVITIHFLTLFLLV), 46-66 (GMIVTFFCITGLLVTRWIYSG), 73-93 (LYESLIFLSWGFSLIHMVSYL), 102-122 (LSAITAPSAIFTQGFATSGLL), 147-167 (MVLGYAALLCGSLLSVALLVI), 226-246 (IISLGFIFLTIGILSGAVWAN), 259-274 (ETWAFITWTVFAIYFH), and 289-309 (VASMGFLIIWICYFGVNLLGI).

It belongs to the CcmF/CycK/Ccl1/NrfE/CcsA family. As to quaternary structure, may interact with Ccs1.

The protein localises to the plastid. It is found in the chloroplast thylakoid membrane. Required during biogenesis of c-type cytochromes (cytochrome c6 and cytochrome f) at the step of heme attachment. The chain is Cytochrome c biogenesis protein CcsA from Gossypium hirsutum (Upland cotton).